Reading from the N-terminus, the 422-residue chain is MRSVLSLALLAVNVVTAAVVAPFDYSGYKVIRVPTQKDNVKEVQRIITDLNLDTWKYPKSEGQNADIVVPPSQISSFMERISGMNIEMMHEDLGLSIRNETSFEAYSAGYAPDINWFKSYHSYQDHLSYLQDLQGLFRTRSEYVDAGKSHEGRTIPALHIWGSGGKNSKPAIIFHGTIHAREWITTMVTEYMAWSFLSQYNKNADITSIVDNFDIWIFPIVNPDGFAFTQTSNRLWRKNRQPNPNARCPGRDLNRNYPYQWVGPGSSSNPCSDTYRGAQPGDGTEIKVHIANMKKIAANKGIAMFVDWHSYGQLFMSPYGYSCTARPPTDARHQELSRIFAQALKAVHGTPYKTGPICNTIYQVNGDSVDYALEVLKVKLSLTAELRDTGARGFVLPADQIIPSGEETLAGTVAMLKAVIQG.

The first 17 residues, 1–17 (MRSVLSLALLAVNVVTA), serve as a signal peptide directing secretion. A propeptide spans 18-112 (AVVAPFDYSG…FEAYSAGYAP (95 aa)) (activation peptide). Residues 119–419 (SYHSYQDHLS…AGTVAMLKAV (301 aa)) enclose the Peptidase M14 domain. Zn(2+) is bound by residues His179 and Glu182. Substrate-binding positions include 179-182 (HARE), Arg237, and 254-255 (NR). Cys248 and Cys271 form a disulfide bridge. His309 contacts Zn(2+). 310–311 (SY) contributes to the substrate binding site. The active-site Proton donor/acceptor is the Glu385.

This sequence belongs to the peptidase M14 family. Zn(2+) is required as a cofactor.

The protein resides in the secreted. Extracellular metalloprotease that contributes to pathogenicity. This chain is Probable metallocarboxypeptidase A (MCPA), found in Trichophyton verrucosum (strain HKI 0517).